A 297-amino-acid chain; its full sequence is Phenylalanine-4-hydroxylase (297 aa).

3 residues coordinate Fe cation: His138, His143, and Glu184.

Belongs to the biopterin-dependent aromatic amino acid hydroxylase family. As to quaternary structure, monomer. The cofactor is Fe(2+).

The catalysed reaction is (6R)-L-erythro-5,6,7,8-tetrahydrobiopterin + L-phenylalanine + O2 = (4aS,6R)-4a-hydroxy-L-erythro-5,6,7,8-tetrahydrobiopterin + L-tyrosine. Its pathway is amino-acid degradation; L-phenylalanine degradation; acetoacetate and fumarate from L-phenylalanine: step 1/6. This is Phenylalanine-4-hydroxylase (phhA) from Chromobacterium violaceum (strain ATCC 12472 / DSM 30191 / JCM 1249 / CCUG 213 / NBRC 12614 / NCIMB 9131 / NCTC 9757 / MK).